The chain runs to 376 residues: Probable sister chromatid cohesion protein DCC1 (376 aa).

Positions 213-232 are disordered; the sequence is QKSPTNSGGGGEEIKGGGGD. Residues 219–232 are compositionally biased toward gly residues; the sequence is SGGGGEEIKGGGGD.

The protein belongs to the DCC1 family.

The protein resides in the nucleus. Functionally, loads PCNA onto primed templates regulating velocity, spacing and restart activity of replication forks. May couple DNA replication to sister chromatid cohesion. This is Probable sister chromatid cohesion protein DCC1 from Dictyostelium discoideum (Social amoeba).